Here is a 228-residue protein sequence, read N- to C-terminus: 5'-methylthioadenosine/S-adenosylhomocysteine nucleosidase (228 aa).

The active-site Proton acceptor is the Glu11. Substrate-binding positions include Gly77, Ile151, and 172–173 (ME). Catalysis depends on Asp196, which acts as the Proton donor.

This sequence belongs to the PNP/UDP phosphorylase family. MtnN subfamily.

The enzyme catalyses S-adenosyl-L-homocysteine + H2O = S-(5-deoxy-D-ribos-5-yl)-L-homocysteine + adenine. It carries out the reaction S-methyl-5'-thioadenosine + H2O = 5-(methylsulfanyl)-D-ribose + adenine. The catalysed reaction is 5'-deoxyadenosine + H2O = 5-deoxy-D-ribose + adenine. It participates in amino-acid biosynthesis; L-methionine biosynthesis via salvage pathway; S-methyl-5-thio-alpha-D-ribose 1-phosphate from S-methyl-5'-thioadenosine (hydrolase route): step 1/2. In terms of biological role, catalyzes the irreversible cleavage of the glycosidic bond in both 5'-methylthioadenosine (MTA) and S-adenosylhomocysteine (SAH/AdoHcy) to adenine and the corresponding thioribose, 5'-methylthioribose and S-ribosylhomocysteine, respectively. Also cleaves 5'-deoxyadenosine, a toxic by-product of radical S-adenosylmethionine (SAM) enzymes, into 5-deoxyribose and adenine. The sequence is that of 5'-methylthioadenosine/S-adenosylhomocysteine nucleosidase from Staphylococcus aureus (strain bovine RF122 / ET3-1).